Here is a 166-residue protein sequence, read N- to C-terminus: Large ribosomal subunit protein uL10 (166 aa).

Belongs to the universal ribosomal protein uL10 family. As to quaternary structure, part of the ribosomal stalk of the 50S ribosomal subunit. The N-terminus interacts with L11 and the large rRNA to form the base of the stalk. The C-terminus forms an elongated spine to which L12 dimers bind in a sequential fashion forming a multimeric L10(L12)X complex.

In terms of biological role, forms part of the ribosomal stalk, playing a central role in the interaction of the ribosome with GTP-bound translation factors. This chain is Large ribosomal subunit protein uL10, found in Hydrogenovibrio crunogenus (strain DSM 25203 / XCL-2) (Thiomicrospira crunogena).